The chain runs to 203 residues: MAYPDFTLENKLSGVIAGVDEVGRGPLAGPVMSAAVVFTNRNIIIEGINDSKKLTAKNRQVLYEKIISVAKFGIGMASVAEINSYNILQATKLSMERALVNLGIELDYVLVDGNQPPKVKWQVKSIVKGDSLSVSVAAASIVAKVARDQLMQELHNQYPEYNWYKNKGYGTKGHIDAINLYGVTEHHRKSFAPILNSTKRALL.

An RNase H type-2 domain is found at 14-203; the sequence is GVIAGVDEVG…ILNSTKRALL (190 aa). Positions 20, 21, and 112 each coordinate a divalent metal cation.

It belongs to the RNase HII family. Mn(2+) is required as a cofactor. It depends on Mg(2+) as a cofactor.

The protein resides in the cytoplasm. It catalyses the reaction Endonucleolytic cleavage to 5'-phosphomonoester.. In terms of biological role, endonuclease that specifically degrades the RNA of RNA-DNA hybrids. The polypeptide is Ribonuclease HII (Wolbachia sp. subsp. Brugia malayi (strain TRS)).